Here is a 1467-residue protein sequence, read N- to C-terminus: Actin cytoskeleton-regulatory complex protein pan1 (1467 aa).

Residues Met-1–Ile-157 are disordered. A compositionally biased stretch (low complexity) spans Gln-25–Pro-48. The span at Gly-50 to Phe-75 shows a compositional bias: polar residues. Low complexity predominate over residues Gly-77–Gln-101. The segment covering Arg-129–Ser-139 has biased composition (polar residues). The EH 1 domain occupies Asp-169–Met-257. Residues Leu-201 to Arg-236 enclose the EF-hand 1 domain. Residues Pro-266–Arg-376 are disordered. The segment covering Pro-292–Gln-301 has biased composition (pro residues). Composition is skewed to polar residues over residues Asn-305–Ala-314 and Leu-340–Thr-370. The region spanning Glu-458 to Asn-547 is the EH 2 domain. An EF-hand 2 domain is found at Leu-491–Lys-526. Disordered regions lie at residues Ala-613–Ser-643, Arg-822–Arg-864, Arg-888–Lys-1087, and Glu-1101–Asp-1467. Residues Thr-634 to His-758 are a coiled coil. A compositionally biased stretch (basic and acidic residues) spans Ile-892–Pro-912. The span at Leu-919–Ser-934 shows a compositional bias: low complexity. Composition is skewed to basic and acidic residues over residues Thr-935–Glu-953, Arg-973–Ser-1009, Ala-1054–Lys-1087, Glu-1101–Ala-1129, and Ala-1136–Glu-1153. The stretch at Asp-965–Asp-1162 forms a coiled coil. A compositionally biased stretch (acidic residues) spans Arg-1154–Gly-1165. A compositionally biased stretch (polar residues) spans Pro-1171 to Leu-1182. Over residues Pro-1183–Glu-1197 the composition is skewed to low complexity. Basic and acidic residues predominate over residues Leu-1279 to Glu-1288. Pro residues-rich tracts occupy residues Ala-1369 to Ala-1381 and Val-1389 to Ala-1430. Residues Asp-1434–Val-1451 form the WH2 domain.

Belongs to the PAN1 family. Component of the PAN1 actin cytoskeleton-regulatory complex.

The protein resides in the cell membrane. It localises to the endosome membrane. The protein localises to the cytoplasm. It is found in the cytoskeleton. Its subcellular location is the actin patch. Functionally, component of the PAN1 actin cytoskeleton-regulatory complex required for the internalization of endosomes during actin-coupled endocytosis. The complex links the site of endocytosis to the cell membrane-associated actin cytoskeleton. Mediates uptake of external molecules and vacuolar degradation of plasma membrane proteins. Plays a role in the proper organization of the cell membrane-associated actin cytoskeleton and promotes its destabilization. The polypeptide is Actin cytoskeleton-regulatory complex protein pan1 (pan1) (Aspergillus fumigatus (strain ATCC MYA-4609 / CBS 101355 / FGSC A1100 / Af293) (Neosartorya fumigata)).